We begin with the raw amino-acid sequence, 177 residues long: MSRVGKMPIAVPKGVDVAINADQISVKGSLGTLVRPVNRLVSVKNEDGKLSFAPADESAAANAMSGTMRALVANMVNGVSKGFERKLTLVGVGFRAQAQGAKLNLQVGFSHPVVKDMPAGIKVECPTQTEIVIKGSDRQVVGQIAAEVRAIRPPEPYKGKGIRYAEEKVSLKETKKK.

It belongs to the universal ribosomal protein uL6 family. As to quaternary structure, part of the 50S ribosomal subunit.

Its function is as follows. This protein binds to the 23S rRNA, and is important in its secondary structure. It is located near the subunit interface in the base of the L7/L12 stalk, and near the tRNA binding site of the peptidyltransferase center. The sequence is that of Large ribosomal subunit protein uL6 from Methylibium petroleiphilum (strain ATCC BAA-1232 / LMG 22953 / PM1).